Consider the following 958-residue polypeptide: Coiled-coil domain-containing protein 33 (958 aa).

A C2 domain is found at 214-353 (SPEEPLIASQ…LVKPTESGKA (140 aa)). A compositionally biased stretch (polar residues) spans 602 to 617 (SKDTVSSTMDLSTSTP). The segment at 602 to 628 (SKDTVSSTMDLSTSTPREAEEEPLVPE) is disordered. Coiled coils occupy residues 632-774 (DTEM…LEDR) and 859-899 (FNLL…RLQE). The segment at 899-958 (EQEKGFRHPSNSIIIEQPSALTHSMDLKQPSELEPLLPSSDSKLNKPLSPQKETANSQQT) is disordered. Composition is skewed to polar residues over residues 907-920 (PSNS…SALT) and 949-958 (QKETANSQQT).

The sequence is that of Coiled-coil domain-containing protein 33 (CCDC33) from Homo sapiens (Human).